The sequence spans 99 residues: Small integral membrane protein 14 (99 aa).

Residues 1-49 (MAEGGFDPCECVCSHEHAMRRLINLLRQSQSYCTDTECLQELPGPSGDN) lie on the Lumenal side of the membrane. The chain crosses the membrane as a helical span at residues 50–70 (GISVTMILVAWMVIALILFLL). Topologically, residues 71–99 (RPPNLRGSNLPGKPTSPHNGQDPPAPPVD) are cytoplasmic. The disordered stretch occupies residues 77–99 (GSNLPGKPTSPHNGQDPPAPPVD).

Its subcellular location is the endoplasmic reticulum membrane. This chain is Small integral membrane protein 14 (SMIM14), found in Pongo abelii (Sumatran orangutan).